The chain runs to 434 residues: SPARC-related modular calcium-binding protein 1 (434 aa).

The signal sequence occupies residues 1-26; the sequence is MLPARCARLLTPHLLLVLVQLSPARG. In terms of domain architecture, Kazal-like spans 37 to 89; that stretch reads SDRDPQCNLHCSRTQPKPICASDGRSYESMCEYQRAKCRDPTLGVVHRGRCKD. 6 disulfides stabilise this stretch: Cys-43–Cys-74, Cys-47–Cys-67, Cys-56–Cys-87, Cys-95–Cys-118, Cys-129–Cys-136, and Cys-138–Cys-158. The Thyroglobulin type-1 1 domain occupies 92 to 158; that stretch reads QSKCRLERAQ…SSVQNKTPVC (67 aa). Residues 149 to 172 show a composition bias toward polar residues; sequence SSVQNKTPVCSGSVTDKPLSQGNS. Positions 149-191 are disordered; it reads SSVQNKTPVCSGSVTDKPLSQGNSGRKDDGSKPTPTMETQPVF. Asn-214 is a glycosylation site (N-linked (GlcNAc...) asparagine). One can recognise a Thyroglobulin type-1 2 domain in the interval 224-292; the sequence is VYSCDQERQS…TSTRYVMPSC (69 aa). Intrachain disulfides connect Cys-227-Cys-251, Cys-262-Cys-269, and Cys-271-Cys-292. EF-hand domains lie at 359–394 and 396–431; these read LEER…VKKK and KPKK…SKEG. Asp-372, Asn-374, Ser-376, Asp-378, Glu-383, Asp-409, Asn-411, Asp-413, and Glu-420 together coordinate Ca(2+). N-linked (GlcNAc...) asparagine glycosylation is present at Asn-374.

Glycosylated. Widely expressed in many tissues with a strongest signal in ovary. No expression in spleen.

It localises to the secreted. It is found in the extracellular space. The protein localises to the extracellular matrix. The protein resides in the basement membrane. Its function is as follows. Plays essential roles in both eye and limb development. Probable regulator of osteoblast differentiation. This Homo sapiens (Human) protein is SPARC-related modular calcium-binding protein 1 (SMOC1).